Consider the following 276-residue polypeptide: Secretagogin (276 aa).

EF-hand domains lie at 12-47 (LDAA…LLAK), 105-140 (DNSV…LFLH), 149-184 (ELEE…QENF), 197-232 (ERKR…MMEL), and 240-276 (VDLD…KINP). The Ca(2+) site is built by D118, D120, S122, E129, D162, N164, D166, R168, D173, D210, S212, T214, E221, D254, N256, D258, K260, and E265.

As to expression, highly expressed in pancreas, in particular in pancreatic islets and pancreatic beta-cells. Detected in prostate, adrenal gland, small intestine, stomach and thyroid (at protein level).

Its subcellular location is the cytoplasm. The protein localises to the secreted. The protein resides in the cytoplasmic vesicle. It is found in the secretory vesicle membrane. This Rattus norvegicus (Rat) protein is Secretagogin (Scgn).